The sequence spans 193 residues: Interferon type A1/A2 (193 aa).

A signal peptide spans 1–31; that stretch reads MAVPASPQHPRGYGILLLTLLLKALATTASA. Cystine bridges form between cysteine 32/cysteine 129, cysteine 61/cysteine 155, and cysteine 68/cysteine 168. 4 N-linked (GlcNAc...) asparagine glycosylation sites follow: asparagine 65, asparagine 71, asparagine 108, and asparagine 186.

Belongs to the alpha/beta interferon family.

It localises to the secreted. Has antiviral activities. This Gallus gallus (Chicken) protein is Interferon type A1/A2 (IFNA1).